Here is a 150-residue protein sequence, read N- to C-terminus: MKVIFLADVKGKGKKGEVKEVPTGYAQNFLIKKNLAKEATAQAIGELRGKQKSEEKAHAELVAEAQAIQAKLAEEATLVEFTEKVGPDGRTFGSITSKKIAEELEKQFGIKLDKRNIKVDSPIRSVGLIDVPVKIYQDITGVINLRVKEG.

The protein belongs to the bacterial ribosomal protein bL9 family.

Binds to the 23S rRNA. This Streptococcus gordonii (strain Challis / ATCC 35105 / BCRC 15272 / CH1 / DL1 / V288) protein is Large ribosomal subunit protein bL9.